A 308-amino-acid polypeptide reads, in one-letter code: D-alanine--D-alanine ligase B (308 aa).

An ATP-grasp domain is found at Lys102–Glu302. Residue Pro128 to Thr183 coordinates ATP. 3 residues coordinate Mg(2+): Asp252, Glu269, and Asn271.

The protein belongs to the D-alanine--D-alanine ligase family. It depends on Mg(2+) as a cofactor. Mn(2+) is required as a cofactor.

Its subcellular location is the cytoplasm. It carries out the reaction 2 D-alanine + ATP = D-alanyl-D-alanine + ADP + phosphate + H(+). It participates in cell wall biogenesis; peptidoglycan biosynthesis. In terms of biological role, cell wall formation. The sequence is that of D-alanine--D-alanine ligase B from Brucella suis biovar 1 (strain 1330).